A 253-amino-acid polypeptide reads, in one-letter code: Sulfate transporter CysZ (253 aa).

The next 4 helical transmembrane spans lie at Phe31–Phe51, Leu75–Ile95, Ile151–Trp171, and Ile222–Val242.

This sequence belongs to the CysZ family.

The protein resides in the cell inner membrane. High affinity, high specificity proton-dependent sulfate transporter, which mediates sulfate uptake. Provides the sulfur source for the cysteine synthesis pathway. The chain is Sulfate transporter CysZ from Shigella flexneri.